The following is a 348-amino-acid chain: GMP reductase (348 aa).

Position 108-131 (108-131 (ADFIKLRQILALSPSLKFICIDVA)) interacts with NADP(+). The K(+) site is built by glycine 181 and glycine 183. Residue cysteine 186 is the Thioimidate intermediate of the active site. NADP(+) is bound at residue 216–239 (IVSDGGCTMPGDVAKAFGGGADFV).

The protein belongs to the IMPDH/GMPR family. GuaC type 1 subfamily. As to quaternary structure, homotetramer.

It catalyses the reaction IMP + NH4(+) + NADP(+) = GMP + NADPH + 2 H(+). Catalyzes the irreversible NADPH-dependent deamination of GMP to IMP. It functions in the conversion of nucleobase, nucleoside and nucleotide derivatives of G to A nucleotides, and in maintaining the intracellular balance of A and G nucleotides. The polypeptide is GMP reductase (Edwardsiella ictaluri (strain 93-146)).